Consider the following 276-residue polypeptide: MSTFRLALIQLQVSSIKSDNLTRACSLVREAAKQGANIVSLPECFNSPYGTTYFPDYAEKIPGESTQKLSEVAKESSIYLIGGSIPEEDAGKLYNTCSVFGPDGSLLVKHRKIHLFDIDVPGKITFQESKTLSPGDSFSTFDTPYCKVGLGICYDMRFAELAQIYAQRGCQLLVYPGAFNLTTGPAHWELLQRARAVDNQVYVATASPARDDKASYVAWGHSTVVDPWGQVLTKAGTEETILYSDIDLKKLAEIRQQIPILKQKRADLYTVESKKP.

Residues F4–L248 enclose the CN hydrolase domain. S26 bears the Phosphoserine mark. Catalysis depends on E43, which acts as the Proton acceptor. An N6-acetyllysine; alternate modification is found at K68. Position 68 is an N6-succinyllysine; alternate (K68). K112 serves as the catalytic Proton donor. An N6-succinyllysine mark is found at K123 and K130. C153 functions as the Nucleophile in the catalytic mechanism.

It belongs to the carbon-nitrogen hydrolase superfamily. NIT1/NIT2 family. In terms of assembly, homodimer.

It localises to the cytoplasm. It carries out the reaction a monoamide of a dicarboxylate + H2O = a dicarboxylate + NH4(+). It catalyses the reaction 2-oxoglutaramate + H2O = 2-oxoglutarate + NH4(+). The catalysed reaction is 2-oxosuccinamate + H2O = oxaloacetate + NH4(+). Functionally, has omega-amidase activity. The role of omega-amidase is to remove potentially toxic intermediates by converting 2-oxoglutaramate and 2-oxosuccinamate to biologically useful 2-oxoglutarate and oxaloacetate, respectively. Can also hydrolyze gamma-monomethyl-alpha-ketoglutarate in vitro. This is Omega-amidase NIT2 from Mus musculus (Mouse).